A 358-amino-acid polypeptide reads, in one-letter code: Ethanol acetyltransferase 1 (358 aa).

The region spanning 59–166 (PIVFIHGLFG…NAPINQPHIS (108 aa)) is the AB hydrolase-1 domain. Residues S132, D156, and H305 each act as charge relay system in the active site.

It belongs to the AB hydrolase superfamily.

The protein resides in the mitochondrion. The enzyme catalyses ethanol + acetyl-CoA = ethyl acetate + CoA. It catalyses the reaction acetyl-CoA + H2O = acetate + CoA + H(+). It carries out the reaction ethyl acetate + H2O = ethanol + acetate + H(+). Functionally, alcohol acetyltransferase that catalyzes the synthesis of ethyl acetate from ethanol and acetyl-CoA. Can also function as a thioesterase by hydrolyzing acetyl-CoA in the absence of ethanol, as well as esterase hydrolyzing ethyl acetate. The chain is Ethanol acetyltransferase 1 (EAT1) from Eremothecium cymbalariae (strain CBS 270.75 / DBVPG 7215 / KCTC 17166 / NRRL Y-17582) (Yeast).